The primary structure comprises 252 residues: MVSGMICKAVVLVFGILYPAYNSYKAVRTKNVKEYVRWMMYWIVFALYTVTETIADLTVSWFPLYFELKIAFVVWLLSPYTRGASLLYRKFLHPLLSSKEKEIDDYIVQAKEKGYETMVNFGKQGLNLAANAAVTAAVKSQGAITERLRSFSMHDLTDVQGDETAETRFFPDGQKKPRASVSDSSGFSSLRKDSGDDRTDEDVEVNSEDEVYSQKGLRRSQSMRSVKVIKGRKEIRYGSLKHKPKKRPQLYF.

A run of 3 helical transmembrane segments spans residues 1–21, 35–55, and 57–77; these read MVSG…YPAY, YVRW…ETIA, and LTVS…VWLL. The tract at residues 163-225 is disordered; sequence ETAETRFFPD…GLRRSQSMRS (63 aa). Positions 198 to 211 are enriched in acidic residues; it reads RTDEDVEVNSEDEV.

It belongs to the DP1 family.

Its subcellular location is the endoplasmic reticulum membrane. Its function is as follows. Microtubule-binding protein required to ensure proper cell division and nuclear envelope reassembly by sequestering the endoplasmic reticulum away from chromosomes during mitosis. Probably acts by clearing the endoplasmic reticulum membrane from metaphase chromosomes. This chain is Receptor expression-enhancing protein 3-B (reep3-b), found in Xenopus laevis (African clawed frog).